We begin with the raw amino-acid sequence, 319 residues long: Olfactory receptor 51F1 (319 aa).

Residues 1–37 lie on the Extracellular side of the membrane; it reads MLQNQDTMEILSNSTSKFPTFLLTGIPGLESAHVWIS. Residues 38 to 58 traverse the membrane as a helical segment; that stretch reads IPFCCFYAIALSGNSVILFVI. Topologically, residues 59–75 are cytoplasmic; that stretch reads ITQQSLHEPMYYFLFRL. Residues 76-96 traverse the membrane as a helical segment; it reads SATDLGLTVSSLSTTLGILWF. Residues 97 to 106 lie on the Extracellular side of the membrane; the sequence is EAREISLYSC. Cysteine 106 and cysteine 188 form a disulfide bridge. A helical membrane pass occupies residues 107–127; it reads IVQMFFLHGFTFMESGVLVAT. At 128-149 the chain is on the cytoplasmic side; sequence AFDRYVAICDPLRYTTILTNSR. The helical transmembrane segment at 150-170 threads the bilayer; sequence IIQMGLLMITRAIVLILPLLL. The Extracellular segment spans residues 171-211; sequence LLKPLYFCRMNALSHSYCYHPDVIQLACSDIRANSICGLID. Residues 212–232 form a helical membrane-spanning segment; the sequence is LILTTGIDTPCIVLSYILIIH. Residues 233-249 are Cytoplasmic-facing; it reads SVLRIASPEEWHKVFST. A helical transmembrane segment spans residues 250-270; that stretch reads CVSHVGAVAFFYIHMLSLSLV. Over 271–279 the chain is Extracellular; that stretch reads YRYGRSAPR. A helical transmembrane segment spans residues 280 to 300; it reads VVHSVMANVYLLLPPVLNPII. At 301 to 319 the chain is on the cytoplasmic side; it reads DSVKTKQIRKAMLSLLLTK.

This sequence belongs to the G-protein coupled receptor 1 family.

Its subcellular location is the cell membrane. Functionally, odorant receptor. This is Olfactory receptor 51F1 (OR51F1) from Homo sapiens (Human).